Here is a 190-residue protein sequence, read N- to C-terminus: Elongation factor P-like protein (190 aa).

The protein belongs to the elongation factor P family.

This Citrobacter koseri (strain ATCC BAA-895 / CDC 4225-83 / SGSC4696) protein is Elongation factor P-like protein.